A 999-amino-acid chain; its full sequence is Bifunctional glutamine synthetase adenylyltransferase/adenylyl-removing enzyme (999 aa).

Residues methionine 1 to leucine 493 form an adenylyl removase region. An adenylyl transferase region spans residues glycine 498 to glycine 999.

It belongs to the GlnE family. The cofactor is Mg(2+).

It catalyses the reaction [glutamine synthetase]-O(4)-(5'-adenylyl)-L-tyrosine + phosphate = [glutamine synthetase]-L-tyrosine + ADP. The enzyme catalyses [glutamine synthetase]-L-tyrosine + ATP = [glutamine synthetase]-O(4)-(5'-adenylyl)-L-tyrosine + diphosphate. In terms of biological role, involved in the regulation of glutamine synthetase GlnA, a key enzyme in the process to assimilate ammonia. When cellular nitrogen levels are high, the C-terminal adenylyl transferase (AT) inactivates GlnA by covalent transfer of an adenylyl group from ATP to specific tyrosine residue of GlnA, thus reducing its activity. Conversely, when nitrogen levels are low, the N-terminal adenylyl removase (AR) activates GlnA by removing the adenylyl group by phosphorolysis, increasing its activity. The regulatory region of GlnE binds the signal transduction protein PII (GlnB) which indicates the nitrogen status of the cell. The protein is Bifunctional glutamine synthetase adenylyltransferase/adenylyl-removing enzyme of Mycolicibacterium smegmatis (strain ATCC 700084 / mc(2)155) (Mycobacterium smegmatis).